Consider the following 175-residue polypeptide: ADP-ribosylation factor 6 (175 aa).

Gly2 is lipidated: N-myristoyl glycine. A lipid anchor (N6-myristoyl lysine) is attached at Lys3. Residues 23-28, 41-44, 63-67, 122-125, and 155-156 contribute to the GTP site; these read AAGKTT, TIPT, DVGGQ, NKQD, and CA.

Belongs to the small GTPase superfamily. Arf family.

The protein resides in the cytoplasm. It is found in the cytosol. Its subcellular location is the cell membrane. The protein localises to the endosome membrane. It localises to the recycling endosome membrane. The protein resides in the cell projection. It is found in the filopodium membrane. Its subcellular location is the ruffle. The protein localises to the cleavage furrow. It localises to the midbody. The protein resides in the midbody ring. It is found in the golgi apparatus. It catalyses the reaction GTP + H2O = GDP + phosphate + H(+). In terms of biological role, GTP-binding protein involved in protein trafficking; regulates endocytic recycling and cytoskeleton remodeling. May modulate vesicle budding and uncoating within the Golgi apparatus. May contribute to the regulation of dendritic branching, filopodia extension and dendritic spine development. This chain is ADP-ribosylation factor 6 (arf6), found in Xenopus laevis (African clawed frog).